The sequence spans 258 residues: Imidazole glycerol phosphate synthase subunit HisF (258 aa).

Active-site residues include Asp11 and Asp130.

It belongs to the HisA/HisF family. Heterodimer of HisH and HisF.

Its subcellular location is the cytoplasm. It carries out the reaction 5-[(5-phospho-1-deoxy-D-ribulos-1-ylimino)methylamino]-1-(5-phospho-beta-D-ribosyl)imidazole-4-carboxamide + L-glutamine = D-erythro-1-(imidazol-4-yl)glycerol 3-phosphate + 5-amino-1-(5-phospho-beta-D-ribosyl)imidazole-4-carboxamide + L-glutamate + H(+). Its pathway is amino-acid biosynthesis; L-histidine biosynthesis; L-histidine from 5-phospho-alpha-D-ribose 1-diphosphate: step 5/9. Functionally, IGPS catalyzes the conversion of PRFAR and glutamine to IGP, AICAR and glutamate. The HisF subunit catalyzes the cyclization activity that produces IGP and AICAR from PRFAR using the ammonia provided by the HisH subunit. This is Imidazole glycerol phosphate synthase subunit HisF from Xanthobacter autotrophicus (strain ATCC BAA-1158 / Py2).